The chain runs to 166 residues: Co-chaperone protein HscB homolog (166 aa).

Residues 3–75 enclose the J domain; it reads QYFTLFRIEP…IDRAAYLLKT (73 aa).

The protein belongs to the HscB family. As to quaternary structure, interacts with HscA and stimulates its ATPase activity.

Its function is as follows. Co-chaperone involved in the maturation of iron-sulfur cluster-containing proteins. Seems to help targeting proteins to be folded toward HscA. The chain is Co-chaperone protein HscB homolog from Neisseria gonorrhoeae (strain NCCP11945).